The following is a 292-amino-acid chain: Homoserine kinase (292 aa).

84–94 (PISRGLGSSSA) contributes to the ATP binding site.

Belongs to the GHMP kinase family. Homoserine kinase subfamily.

It is found in the cytoplasm. The catalysed reaction is L-homoserine + ATP = O-phospho-L-homoserine + ADP + H(+). It participates in amino-acid biosynthesis; L-threonine biosynthesis; L-threonine from L-aspartate: step 4/5. Functionally, catalyzes the ATP-dependent phosphorylation of L-homoserine to L-homoserine phosphate. This Sulfurovum sp. (strain NBC37-1) protein is Homoserine kinase.